Consider the following 414-residue polypeptide: Riboflavin biosynthesis protein RibBA (414 aa).

A DHBP synthase region spans residues 1-204 (MTRFDTIERA…IADMIAWRRK (204 aa)). Residues 28–29 (RE), D33, 141–145 (RPGHT), and E165 contribute to the D-ribulose 5-phosphate site. Residue E29 participates in Mg(2+) binding. A Mg(2+)-binding site is contributed by H144. A GTP cyclohydrolase II region spans residues 205 to 414 (HEKQVVRVAE…DDLDLGETAQ (210 aa)). 255–259 (RVHSE) contributes to the GTP binding site. Residues C260, C271, and C273 each coordinate Zn(2+). GTP contacts are provided by residues Q276, 299–301 (EGR), and T321. Catalysis depends on D333, which acts as the Proton acceptor; for GTP cyclohydrolase activity. R335 functions as the Nucleophile; for GTP cyclohydrolase activity in the catalytic mechanism. The GTP site is built by T356 and K361.

In the N-terminal section; belongs to the DHBP synthase family. The protein in the C-terminal section; belongs to the GTP cyclohydrolase II family. Requires Mg(2+) as cofactor. Mn(2+) is required as a cofactor. Zn(2+) serves as cofactor.

The catalysed reaction is D-ribulose 5-phosphate = (2S)-2-hydroxy-3-oxobutyl phosphate + formate + H(+). The enzyme catalyses GTP + 4 H2O = 2,5-diamino-6-hydroxy-4-(5-phosphoribosylamino)-pyrimidine + formate + 2 phosphate + 3 H(+). Its pathway is cofactor biosynthesis; riboflavin biosynthesis; 2-hydroxy-3-oxobutyl phosphate from D-ribulose 5-phosphate: step 1/1. It participates in cofactor biosynthesis; riboflavin biosynthesis; 5-amino-6-(D-ribitylamino)uracil from GTP: step 1/4. Catalyzes the conversion of D-ribulose 5-phosphate to formate and 3,4-dihydroxy-2-butanone 4-phosphate. Its function is as follows. Catalyzes the conversion of GTP to 2,5-diamino-6-ribosylamino-4(3H)-pyrimidinone 5'-phosphate (DARP), formate and pyrophosphate. The protein is Riboflavin biosynthesis protein RibBA of Nocardia farcinica (strain IFM 10152).